Here is a 159-residue protein sequence, read N- to C-terminus: 2-C-methyl-D-erythritol 2,4-cyclodiphosphate synthase (159 aa).

Residues aspartate 8 and histidine 10 each contribute to the a divalent metal cation site. 4-CDP-2-C-methyl-D-erythritol 2-phosphate contacts are provided by residues 8–10 (DVH) and 34–35 (HS). Histidine 42 lines the a divalent metal cation pocket. 4-CDP-2-C-methyl-D-erythritol 2-phosphate-binding positions include 56–58 (DIG), 61–65 (FPDTD), 100–106 (AQAPKMA), 132–135 (TTSE), phenylalanine 139, and arginine 142.

It belongs to the IspF family. As to quaternary structure, homotrimer. It depends on a divalent metal cation as a cofactor.

It catalyses the reaction 4-CDP-2-C-methyl-D-erythritol 2-phosphate = 2-C-methyl-D-erythritol 2,4-cyclic diphosphate + CMP. Its pathway is isoprenoid biosynthesis; isopentenyl diphosphate biosynthesis via DXP pathway; isopentenyl diphosphate from 1-deoxy-D-xylulose 5-phosphate: step 4/6. In terms of biological role, involved in the biosynthesis of isopentenyl diphosphate (IPP) and dimethylallyl diphosphate (DMAPP), two major building blocks of isoprenoid compounds. Catalyzes the conversion of 4-diphosphocytidyl-2-C-methyl-D-erythritol 2-phosphate (CDP-ME2P) to 2-C-methyl-D-erythritol 2,4-cyclodiphosphate (ME-CPP) with a corresponding release of cytidine 5-monophosphate (CMP). The sequence is that of 2-C-methyl-D-erythritol 2,4-cyclodiphosphate synthase from Aliivibrio salmonicida (strain LFI1238) (Vibrio salmonicida (strain LFI1238)).